Reading from the N-terminus, the 338-residue chain is Short-chain dehydrogenase/reductase phmF (338 aa).

Residues L46, R71, D96, and N123 each contribute to the NADP(+) site. Catalysis depends on S177, which acts as the Proton donor. Residues Y211 and K215 each contribute to the NADP(+) site. Y211 functions as the Proton acceptor in the catalytic mechanism. K215 acts as the Lowers pKa of active site Tyr in catalysis.

It belongs to the short-chain dehydrogenases/reductases (SDR) family.

Its pathway is mycotoxin biosynthesis. Functionally, short-chain dehydrogenase/reductase; part of the gene cluster that mediates the biosynthesis of the mycotoxins phomacins, leucine-derived cytochalasans with potent actin polymerization-inhibitory activities and monocot-specific antigerminative activities. The first step in the pathway is catalyzed by the hybrid PKS-NRPS phmA, assisted by the enoyl reductase phmE, that are responsible for fusion of the leucine precursor and the polyketide backbone to produce a 2-pyrrolidone intermediate. The polyketide synthase module (PKS) of phmA is responsible for the synthesis of the polyketide backbone and the downstream nonribosomal peptide synthetase (NRPS) amidates the carboxyl end of the polyketide with the leucine precursor. Because phmA lacks a designated enoylreductase (ER) domain, the required activity is provided the enoyl reductase phmE. Reduction by the hydrolyase phmG, followed by dehydration and intra-molecular Diels-Alder cyclization by the Diels-Alderase phmD then yield the required isoindolone-fused macrocycle. A number of oxidative steps catalyzed by the tailoring cytochrome P450 monooxygenase phmB, the FAD-linked oxidoreductase phmC and the short-chain dehydrogenase/reductase phmF, are further required to afford the final products, phomacin D and phomacin E. The polypeptide is Short-chain dehydrogenase/reductase phmF (Phaeosphaeria nodorum (strain SN15 / ATCC MYA-4574 / FGSC 10173) (Glume blotch fungus)).